A 450-amino-acid chain; its full sequence is Serine--tRNA ligase, cytoplasmic (450 aa).

Residue 238–240 (TSE) coordinates L-serine. Residues 271–273 (RRE) and valine 287 contribute to the ATP site. Position 294 (glutamate 294) interacts with L-serine. An ATP-binding site is contributed by 358–361 (ELVS). Threonine 396 is a binding site for L-serine.

It belongs to the class-II aminoacyl-tRNA synthetase family. Type-1 seryl-tRNA synthetase subfamily. In terms of assembly, homodimer. The tRNA molecule binds across the dimer.

Its subcellular location is the cytoplasm. It localises to the cytosol. It carries out the reaction tRNA(Ser) + L-serine + ATP = L-seryl-tRNA(Ser) + AMP + diphosphate + H(+). Its function is as follows. Catalyzes the attachment of serine to tRNA(Ser) in a two-step reaction: serine is first activated by ATP to form Ser-AMP and then transferred to the acceptor end of tRNA(Ser). In Schizosaccharomyces pombe (strain 972 / ATCC 24843) (Fission yeast), this protein is Serine--tRNA ligase, cytoplasmic.